A 572-amino-acid chain; its full sequence is Dityrosine transporter 1 (572 aa).

2 disordered regions span residues 1–28 and 49–95; these read MGSE…STFH and RANI…SPDT. Topologically, residues 1–110 are cytoplasmic; that stretch reads MGSEPFQKKN…YTYFSKDQRL (110 aa). Residues 13-28 are compositionally biased toward polar residues; the sequence is LQINSQESGTTRSTFH. Residues 50–62 are compositionally biased toward basic and acidic residues; it reads ANIDHDVFHEHPD. The span at 83–95 shows a compositional bias: polar residues; the sequence is SSNSQSRDPSPDT. A helical membrane pass occupies residues 111–131; sequence IIFGIIIFIGFLGPMSGNIYI. Residues 132–149 lie on the Extracellular side of the membrane; the sequence is PALPLLQREYDVSATTIN. The helical transmembrane segment at 150 to 170 threads the bilayer; it reads ATVSVFMAVFSVGPLFWGALA. At 171-184 the chain is on the cytoplasmic side; that stretch reads DFGGRKFLYMVSLS. A helical membrane pass occupies residues 185 to 205; sequence LMLIVNILLAAVPVNIAALFV. The Extracellular segment spans residues 206–207; sequence LR. Residues 208–228 traverse the membrane as a helical segment; it reads IFQAFASSSVISLGAGTVTDV. Residues 229 to 240 lie on the Cytoplasmic side of the membrane; the sequence is VPPKHRGKAIAY. A helical transmembrane segment spans residues 241–261; it reads FMMGPNMGPIIAPIVAGLILM. The Extracellular portion of the chain corresponds to 262 to 267; sequence KGNYWR. Residues 268-288 form a helical membrane-spanning segment; sequence WLFGFTSIMTGIALILVTALL. Residues 289–366 are Cytoplasmic-facing; it reads PETLRCIVGN…TLYWKMIKCP (78 aa). A helical membrane pass occupies residues 367–387; that stretch reads PIIITSVSTALLFSSYYAFSV. The Extracellular portion of the chain corresponds to 388–398; sequence TFSYYLEHDYR. A helical membrane pass occupies residues 399 to 419; that stretch reads FTMLEIGAAYVCPGVAMLLGS. The Cytoplasmic portion of the chain corresponds to 420–446; that stretch reads QSGGHLSDYLRSRWIKSHPKKKFPAEF. A helical membrane pass occupies residues 447–469; it reads RLLLNLIGILLTICGTIGYGWAI. The Extracellular segment spans residues 470 to 472; it reads FFH. A helical membrane pass occupies residues 473-493; that stretch reads YHFVVLLVFSALTAFGMTWCS. Over 494 to 520 the chain is Cytoplasmic; sequence NTSMTYLTELFPKRAAGTVAVSSFFRN. Residues 521–541 form a helical membrane-spanning segment; it reads VGAAISSAIILQLCNAMGIGW. A topological domain (extracellular) is located at residue Cys542. The chain crosses the membrane as a helical span at residues 543 to 563; the sequence is FTGLGLCSSISLIGILYLLIF. A required for the localization to the prospore membrane region spans residues 548 to 572; that stretch reads LCSSISLIGILYLLIFQRKYTAKEF. The Cytoplasmic segment spans residues 564–572; the sequence is QRKYTAKEF.

This sequence belongs to the major facilitator superfamily. CAR1 family. Phosphorylated.

Its subcellular location is the prospore membrane. Functionally, prospore-specific dityrosine transporter responsible for translocation of dityrosine through the prospore membrane and required for the formation of the outermost layer of the spore. The sequence is that of Dityrosine transporter 1 (DTR1) from Saccharomyces cerevisiae (strain ATCC 204508 / S288c) (Baker's yeast).